Consider the following 142-residue polypeptide: MKTFVAKPETVKRDWYVVDATGKTLGRLATELARRLRGKHKAEYTPHVDTGDYIIVINAEKVAVTGKKETDKIYYWHTGYVGGIKDATFKEMIARRPEAVIEIAVKGMLPKGPLGREMFRKLKVYAGNEHNHAAQQPQVLDI.

It belongs to the universal ribosomal protein uL13 family. Part of the 50S ribosomal subunit.

In terms of biological role, this protein is one of the early assembly proteins of the 50S ribosomal subunit, although it is not seen to bind rRNA by itself. It is important during the early stages of 50S assembly. This Actinobacillus pleuropneumoniae serotype 5b (strain L20) protein is Large ribosomal subunit protein uL13.